A 271-amino-acid polypeptide reads, in one-letter code: Magnetosome protein MamX (271 aa).

At 1 to 10 the chain is on the cytoplasmic side; it reads MSSKAVAHPN. A helical transmembrane segment spans residues 11 to 31; sequence IAVWIMALGIAFSMALVLTAV. Topologically, residues 32–271 are lumenal; it reads FNANPWEDHT…NAGGMDAEER (240 aa). An MCR (magnetochrome) 1 motif is present at residues 48 to 71; that stretch reads IVAGMPAPHRDGREKMVCSSCHIV. Residues cysteine 65, cysteine 68, histidine 69, cysteine 104, cysteine 107, and histidine 108 each contribute to the heme site. An MCR 2 motif is present at residues 87–110; sequence IVQGTPAPHVDGREKMPCASCHTI.

This sequence belongs to the magnetosome MamX family. The cofactor is heme.

It localises to the magnetosome membrane. Functionally, required for correct biomineralization of the magnetosome, may be involved in redox control of biomineralization. May function with MamY, MamZ amd Mms6. In Paramagnetospirillum magneticum (strain ATCC 700264 / AMB-1) (Magnetospirillum magneticum), this protein is Magnetosome protein MamX (mamX).